A 917-amino-acid polypeptide reads, in one-letter code: Calcium-activated chloride channel regulator 1 (917 aa).

The first 21 residues, 1–21 (MGSFRSSLFILVLHLLEGAQS), serve as a signal peptide directing secretion. The segment at 46–199 (DERLIQNIKD…AIRGTNVLPQ (154 aa)) is metalloprotease domain. Residue His-156 participates in Zn(2+) binding. The active site involves Glu-157. Residues His-160 and Asn-167 each coordinate Zn(2+). The 170-residue stretch at 306-475 (IVCLVLDKSG…NGLIDAFGAL (170 aa)) folds into the VWFA domain. N-linked (GlcNAc...) asparagine glycans are attached at residues Asn-503, Asn-772, Asn-806, Asn-812, Asn-838, and Asn-893.

The protein belongs to the CLCR family. Post-translationally, glycosylated. In terms of processing, the translation product is autoproteolytically cleaved by the metalloprotease domain in the endoplasmic reticulum into a N-terminal and a C-terminal products that remain physically associated with each other. The cleavage is necessary for calcium-activated chloride channel (CaCC) activation activity. As to expression, expressed in ileum, trachea, and the major salivary glands. In ileum, expressed to the crypt and villus epithelia, whereas in trachea expressed in both surface epithelium and submucosal glands.

It localises to the secreted. The protein localises to the extracellular space. Functionally, may be involved in mediating calcium-activated chloride conductance. May play critical roles in goblet cell metaplasia, mucus hypersecretion, cystic fibrosis and AHR. May be involved in the regulation of mucus production and/or secretion by goblet cells. Involved in the regulation of tissue inflammation in the innate immune response. May play a role as a tumor suppressor. Induces MUC5AC. Induces a cAMP-dependent chloride conductance possibly through effects on CFTR in colon carcinoma cells. This Sus scrofa (Pig) protein is Calcium-activated chloride channel regulator 1 (CLCA1).